A 955-amino-acid chain; its full sequence is UPF0182 protein PMT_0755 (955 aa).

9 consecutive transmembrane segments (helical) span residues 25 to 45 (LLLS…WLWF), 58 to 78 (WLWQ…CQLW), 107 to 127 (LLGC…LAWL), 146 to 166 (IWAL…MLGN), 178 to 198 (CFCF…ALAI), 214 to 234 (FGLG…AQLI), 264 to 284 (CNFL…LLWL), 313 to 333 (SLAS…TWIQ), and 340 to 360 (LIAS…APFV).

The protein belongs to the UPF0182 family.

Its subcellular location is the cell membrane. This is UPF0182 protein PMT_0755 from Prochlorococcus marinus (strain MIT 9313).